Here is a 448-residue protein sequence, read N- to C-terminus: Mitochondrial distribution and morphology protein 10 (448 aa).

The protein belongs to the MDM10 family. As to quaternary structure, component of the ER-mitochondria encounter structure (ERMES) or MDM complex, composed of MMM1, MDM10, MDM12 and MDM34. Associates with the mitochondrial outer membrane sorting assembly machinery SAM(core) complex.

The protein localises to the mitochondrion outer membrane. In terms of biological role, component of the ERMES/MDM complex, which serves as a molecular tether to connect the endoplasmic reticulum and mitochondria. Components of this complex are involved in the control of mitochondrial shape and protein biogenesis and may function in phospholipid exchange. MDM10 is involved in the late assembly steps of the general translocase of the mitochondrial outer membrane (TOM complex). Functions in the TOM40-specific route of the assembly of outer membrane beta-barrel proteins, including the association of TOM40 with the receptor TOM22 and small TOM proteins. Can associate with the SAM(core) complex as well as the MDM12-MMM1 complex, both involved in late steps of the major beta-barrel assembly pathway, that is responsible for biogenesis of all outer membrane beta-barrel proteins. May act as a switch that shuttles between both complexes and channels precursor proteins into the TOM40-specific pathway. Plays a role in mitochondrial morphology and in the inheritance of mitochondria. The protein is Mitochondrial distribution and morphology protein 10 of Zygosaccharomyces rouxii (strain ATCC 2623 / CBS 732 / NBRC 1130 / NCYC 568 / NRRL Y-229).